The following is a 471-amino-acid chain: POU domain protein 2 (471 aa).

A compositionally biased stretch (acidic residues) spans 1-18; it reads CGKSYEEEEEEEDDELEA. Disordered stretches follow at residues 1–32 and 149–238; these read CGKS…SARQ and DQQL…PKPL. Positions 165–180 are enriched in low complexity; it reads STPLSKSPLRSPSLSP. Over residues 186 to 196 the composition is skewed to polar residues; sequence EPQQAQRTPPN. A compositionally biased stretch (low complexity) spans 197–230; sequence SLAAAGLGLSSAVLTPNTPSMQQQQQQTMTSTTN. The region spanning 257–331 is the POU-specific domain; the sequence is EETTDLEELE…LLQKWLEDAD (75 aa). A DNA-binding region (homeobox) is located at residues 362 to 421; it reads RRKKRTSIETTIRGALEQAFVLNCKPTSEEINQLSERLHMDKEVVRVWFCNRRQKEKRIN.

This sequence belongs to the POU transcription factor family. Class-2 subfamily.

Its subcellular location is the nucleus. DNA-binding regulatory protein implicated in early development. Involved in neuronal cell fate decision. May act as an octamer-dependent activator of transcription. The chain is POU domain protein 2 (pdm2) from Drosophila virilis (Fruit fly).